Consider the following 218-residue polypeptide: Ribulose-phosphate 3-epimerase (218 aa).

Residue S10 participates in substrate binding. H35, D37, and H68 together coordinate a divalent metal cation. The active-site Proton acceptor is D37. Substrate is bound by residues H68, 144 to 147 (GFSG), 177 to 179 (DGG), and 199 to 200 (GS). D177 provides a ligand contact to a divalent metal cation. D177 acts as the Proton donor in catalysis.

It belongs to the ribulose-phosphate 3-epimerase family. It depends on a divalent metal cation as a cofactor.

The enzyme catalyses D-ribulose 5-phosphate = D-xylulose 5-phosphate. The protein operates within carbohydrate degradation. In terms of biological role, catalyzes the reversible epimerization of D-ribulose 5-phosphate to D-xylulose 5-phosphate. The sequence is that of Ribulose-phosphate 3-epimerase from Treponema pallidum (strain Nichols).